A 347-amino-acid polypeptide reads, in one-letter code: Cell shape-determining protein MreB (347 aa).

ATP contacts are provided by residues 19–21 (TAN), 165–167 (GGT), 213–216 (ERIK), and 295–298 (GGAL).

Belongs to the FtsA/MreB family. Forms polymers in the presence of ATP. Forms pairs of protofilaments that adopt an antiparallel arrangement and bind to lipids.

It localises to the cytoplasm. Its function is as follows. Forms membrane-associated dynamic filaments that are essential for cell shape determination. Acts by regulating cell wall synthesis and cell elongation, and thus cell shape. A feedback loop between cell geometry and MreB localization may maintain elongated cell shape by targeting cell wall growth to regions of negative cell wall curvature. Required for mid-cell peptidoglycan synthesis and cell division. Directs the localization of the cytosolic peptidoglycan precursor-synthesizing enzyme MurG. Also required for proper chromosome segregation. Directs the segregation of origin-proximal but not origin-distal loci. The polypeptide is Cell shape-determining protein MreB (Caulobacter vibrioides (strain NA1000 / CB15N) (Caulobacter crescentus)).